Here is a 213-residue protein sequence, read N- to C-terminus: Germin-like protein 8-14 (213 aa).

A signal peptide spans 1–23; the sequence is MAKAVMMLPVLLSFLLLPFSSMA. The cysteines at positions 29 and 44 are disulfide-linked. One can recognise a Cupin type-1 domain in the interval 56-203; it reads HGLAAAGNTS…VTFLDDAQVK (148 aa). A glycan (N-linked (GlcNAc...) asparagine) is linked at N63. H104, H106, E111, and H151 together coordinate Mn(2+).

Belongs to the germin family. Oligomer (believed to be a pentamer but probably hexamer). In terms of processing, phosphorylated on threonine residue.

Its subcellular location is the secreted. It is found in the extracellular space. The protein resides in the apoplast. In terms of biological role, may play a role in plant defense. Probably has no oxalate oxidase activity even if the active site is conserved. In Oryza sativa subsp. japonica (Rice), this protein is Germin-like protein 8-14 (GER5).